The following is a 305-amino-acid chain: Acetaldehyde dehydrogenase (305 aa).

Cysteine 130 (acyl-thioester intermediate) is an active-site residue. NAD(+) contacts are provided by residues 161 to 169 (SVGPGTRKN) and asparagine 272.

This sequence belongs to the acetaldehyde dehydrogenase family.

It catalyses the reaction acetaldehyde + NAD(+) + CoA = acetyl-CoA + NADH + H(+). This Leptothrix cholodnii (strain ATCC 51168 / LMG 8142 / SP-6) (Leptothrix discophora (strain SP-6)) protein is Acetaldehyde dehydrogenase.